The primary structure comprises 377 residues: Peptidyl-prolyl cis-trans isomerase D (377 aa).

Residues 11–178 (YFDIQIGSQK…TDVTIVDCGE (168 aa)) enclose the PPIase cyclophilin-type domain. TPR repeat units lie at residues 220–253 (ASEL…LNEF), 273–306 (FTLH…ADAA), and 314–347 (AKAY…APGD).

Belongs to the cyclophilin-type PPIase family. PPIase D subfamily.

Its subcellular location is the cytoplasm. It carries out the reaction [protein]-peptidylproline (omega=180) = [protein]-peptidylproline (omega=0). Its function is as follows. PPIases accelerate the folding of proteins. It catalyzes the cis-trans isomerization of proline imidic peptide bonds in oligopeptides. In Aspergillus fumigatus (strain ATCC MYA-4609 / CBS 101355 / FGSC A1100 / Af293) (Neosartorya fumigata), this protein is Peptidyl-prolyl cis-trans isomerase D (cpr6).